Here is a 138-residue protein sequence, read N- to C-terminus: Dehydratase iacD (138 aa).

An EthD domain is found at 18-113; that stretch reads GVSEEDFIEW…LKDQDVWMDN (96 aa).

Belongs to the tpcK family.

It functions in the pathway secondary metabolite biosynthesis. Dehydratase; part of the gene cluster that mediates the biosynthesis of iso-A82775C, a enylepoxycyclohexane and biosynthetic precursor of the chloropestolide anticancer natural products. Within the cluster, the prenyltransferase iacE prenylates siccayne to generate pestalodiol E, using dimethylallyl diphosphate (DMAPP) as cosubstrate. The probable oxidoreductase iacF is then involved in the epoxidation of pestalodiol F to pestalodiol F, which is further converted to pestalofone A by the short-chain dehydrogenase/reductase iacG. Iso-A82775C is subsequently generated from pestalofone A by the short-chain dehydrogenase/reductase iacC. Iso-A82775C is further condensed with maldoxin via a Diels-Alder reaction to produce the anticancer natural products chloropestolides A to E. The sequence is that of Dehydratase iacD from Pestalotiopsis fici (strain W106-1 / CGMCC3.15140).